The primary structure comprises 146 residues: Leghemoglobin 1 (146 aa).

Residues 2 to 146 (GFTAQQDALV…LAAAIKKAMS (145 aa)) enclose the Globin domain. A phosphoserine; by CCAMK mark is found at serine 13 and serine 14. Tyrosine 30 is modified (nitrated tyrosine). Residues serine 45 and serine 55 each carry the phosphoserine; by CCAMK modification. Serine 45 provides a ligand contact to heme b. O2 is bound at residue histidine 61. Positions 64, 93, and 96 each coordinate heme b. Serine 123 bears the Phosphoserine; by CCAMK mark. Tyrosine 134 is subject to Nitrated tyrosine.

Belongs to the plant globin family. Monomer. In terms of processing, nitrated in effective nodules and particularly in hypoxic conditions; this mechanism may play a protective role in the symbiosis by buffering toxic peroxynitrite NO(2)(-). Nitration level decrease during nodule senescence. Post-translationally, phosphorylated by CCAMK at serine residues in a Ca(2+)-dependent manner; the phosphorylation at Ser-45 disrupts the molecular environment of its porphyrin ring oxygen binding pocket, thus leading to a reduced oxygen consumption and to the delivery of oxygen O(2) to symbiosomes. Specifically and strongly expressed in root nodules and at low levels in seedlings.

The protein resides in the cytoplasm. The protein localises to the cytosol. It is found in the nucleus. In terms of biological role, leghemoglobin that reversibly binds oxygen O(2) through a pentacoordinated heme iron. In root nodules, facilitates the diffusion of oxygen to the bacteroids while preventing the bacterial nitrogenase from being inactivated by buffering dioxygen, nitric oxide and carbon monoxide, and promoting the formation of reactive oxygen species (ROS, e.g. H(2)O(2)). This role is essential for symbiotic nitrogen fixation (SNF). The polypeptide is Leghemoglobin 1 (Lotus japonicus (Lotus corniculatus var. japonicus)).